The chain runs to 301 residues: Pyridoxal 5'-phosphate synthase subunit PdxS (301 aa).

Asp31 serves as a coordination point for D-ribose 5-phosphate. Lys88 serves as the catalytic Schiff-base intermediate with D-ribose 5-phosphate. Gly160 lines the D-ribose 5-phosphate pocket. Lys172 serves as a coordination point for D-glyceraldehyde 3-phosphate. Residues Gly221 and Gly242–Ser243 contribute to the D-ribose 5-phosphate site.

Belongs to the PdxS/SNZ family. As to quaternary structure, in the presence of PdxT, forms a dodecamer of heterodimers.

It carries out the reaction aldehydo-D-ribose 5-phosphate + D-glyceraldehyde 3-phosphate + L-glutamine = pyridoxal 5'-phosphate + L-glutamate + phosphate + 3 H2O + H(+). Its pathway is cofactor biosynthesis; pyridoxal 5'-phosphate biosynthesis. Its function is as follows. Catalyzes the formation of pyridoxal 5'-phosphate from ribose 5-phosphate (RBP), glyceraldehyde 3-phosphate (G3P) and ammonia. The ammonia is provided by the PdxT subunit. Can also use ribulose 5-phosphate and dihydroxyacetone phosphate as substrates, resulting from enzyme-catalyzed isomerization of RBP and G3P, respectively. This is Pyridoxal 5'-phosphate synthase subunit PdxS from Methanosarcina acetivorans (strain ATCC 35395 / DSM 2834 / JCM 12185 / C2A).